A 466-amino-acid chain; its full sequence is Argininosuccinate lyase (466 aa).

Belongs to the lyase 1 family. Argininosuccinate lyase subfamily.

Its subcellular location is the cytoplasm. It catalyses the reaction 2-(N(omega)-L-arginino)succinate = fumarate + L-arginine. It functions in the pathway amino-acid biosynthesis; L-arginine biosynthesis; L-arginine from L-ornithine and carbamoyl phosphate: step 3/3. The protein is Argininosuccinate lyase of Brucella anthropi (strain ATCC 49188 / DSM 6882 / CCUG 24695 / JCM 21032 / LMG 3331 / NBRC 15819 / NCTC 12168 / Alc 37) (Ochrobactrum anthropi).